A 2266-amino-acid chain; its full sequence is Protein ELYS (2266 aa).

The interval 1 to 494 (MRDLRAQVTS…SGVVHLTCTG (494 aa)) is seven-bladed beta propeller repeats. Positions 1–981 (MRDLRAQVTS…QTLKINVMND (981 aa)) are necessary for cytoplasmic localization. Residues Ser509, Ser528, Ser1080, Ser1138, Ser1142, Ser1150, Ser1153, Ser1155, and Ser1160 each carry the phosphoserine modification. Residues 591-1092 (VVLTKEEFDR…IEEPSPIVYS (502 aa)) are important for nuclear localization. Residues 1019–2266 (YHLSTSSVFR…PKQILRRKML (1248 aa)) form a disordered region. The tract at residues 1149–2266 (RSLPSSSQLK…PKQILRRKML (1118 aa)) is necessary for nuclear localization. Thr1175 carries the post-translational modification Phosphothreonine. Residues Ser1214, Ser1218, Ser1222, Ser1232, and Ser1250 each carry the phosphoserine modification. Thr1257 is subject to Phosphothreonine. A phosphoserine mark is found at Ser1283 and Ser1297. 2 stretches are compositionally biased toward polar residues: residues 1305 to 1320 (KGNS…TTLE) and 1335 to 1353 (FTAS…NVTE). Residue Thr1369 is modified to Phosphothreonine. Ser1371 and Ser1513 each carry phosphoserine. The interval 1446–1698 (RANDNKSMAD…MEQSIHETIP (253 aa)) is mediates transcriptional activity. Thr1517 is modified (phosphothreonine). Ser1533, Ser1541, Ser1729, and Ser1806 each carry phosphoserine. Polar residues-rich tracts occupy residues 1796–1808 (LSQN…NSVT) and 1822–1838 (ILEN…ITTG). Position 1808 is a phosphothreonine (Thr1808). The segment at 1842–2266 (KRLKSSQLLE…PKQILRRKML (425 aa)) is important for nuclear localization and chromatin binding. Phosphoserine occurs at positions 1878, 1884, and 1898. A compositionally biased stretch (polar residues) spans 1908-1919 (STNLDASENTGN). Basic and acidic residues-rich tracts occupy residues 1920-1930 (KQDDKSSDKQL) and 1940-1952 (GREV…REDS). Phosphoserine occurs at positions 1944 and 1946. The segment at residues 1971–1983 (PRKRGRPRKINPS) is a DNA-binding region (a.T hook). A compositionally biased stretch (basic and acidic residues) spans 1986–2004 (VGSKAVKEERSPKKKEAPS). Phosphoserine occurs at positions 1996, 2043, 2044, and 2060. The segment covering 2064 to 2084 (VSEERTDEMTHKETNEQEERL) has biased composition (basic and acidic residues). 4 positions are modified to phosphoserine: Ser2089, Ser2120, Ser2123, and Ser2154. Positions 2169–2179 (NKLEDELKDDA) are enriched in basic and acidic residues. The segment covering 2188 to 2197 (PKAKRIRTSK) has biased composition (basic residues). Ser2212, Ser2222, and Ser2226 each carry phosphoserine.

Belongs to the ELYS family. In terms of assembly, associates with the Nup107-160 subcomplex of the NPC.

The protein resides in the cytoplasm. The protein localises to the nucleus. Its subcellular location is the nucleus envelope. It localises to the nucleus matrix. It is found in the chromosome. The protein resides in the centromere. The protein localises to the kinetochore. Its subcellular location is the nucleoplasm. It localises to the nuclear pore complex. In terms of biological role, required for the assembly of a functional nuclear pore complex (NPC) on the surface of chromosomes as nuclei form at the end of mitosis. May initiate NPC assembly by binding to chromatin and recruiting the Nup107-160 subcomplex of the NPC. Also required for the localization of the Nup107-160 subcomplex of the NPC to the kinetochore during mitosis and for the completion of cytokinesis. In Homo sapiens (Human), this protein is Protein ELYS (AHCTF1).